The following is a 1248-amino-acid chain: Ankyrin repeat and sterile alpha motif domain-containing protein 1B (1248 aa).

ANK repeat units lie at residues 2–31 (GKDQ…GGIL), 58–87 (SGYT…STNV), 91–120 (KGYF…SHSR), 127–156 (ENET…DPTI), 160–189 (KLET…NLMS), 193–222 (RKHT…DVSC), and 225–254 (EKGS…DANI). The interval 296 to 322 (EPVQEDATQETHISSPVESPSQKTKSE) is disordered. Residues 305 to 322 (ETHISSPVESPSQKTKSE) show a composition bias toward polar residues. Phosphoserine is present on residues serine 309, serine 310, serine 314, serine 353, and serine 364. 3 disordered regions span residues 367–400 (ELGK…NTCG), 474–514 (APSP…PDTA), and 558–623 (SFTA…ENPF). Over residues 371 to 384 (NGSQSVRTSSTINL) the composition is skewed to polar residues. Residues 388 to 397 (EVEEEDDDEN) show a composition bias toward acidic residues. Phosphothreonine is present on threonine 503. Phosphoserine is present on residues serine 507 and serine 510. A compositionally biased stretch (low complexity) spans 558 to 575 (SFTASPPASPPTSSVGTT). Over residues 577 to 601 (VKNEGTNHTDDLSRQDDNDPPKEYD) the composition is skewed to basic and acidic residues. Serine 738 is modified (phosphoserine). The segment at 749–777 (EKTSRVNWSESSTAEHSSKGNSERTPSFT) is disordered. A compositionally biased stretch (polar residues) spans 753–763 (RVNWSESSTAE). Threonine 773 is subject to Phosphothreonine. The residue at position 775 (serine 775) is a Phosphoserine. 2 SAM domains span residues 810–876 (CPVQ…LPKM) and 884–949 (YHPT…RLHD). Phosphotyrosine is present on tyrosine 901. The Nuclear localization signal signature appears at 935-938 (HRKR). The interval 944-989 (GDRLHDDPPQKPPRSITLREPSGNHTPPQLSPSLSQSTYTTGGSLD) is disordered. A compositionally biased stretch (low complexity) spans 969-984 (TPPQLSPSLSQSTYTT). A Phosphoserine modification is found at serine 974. Position 1007 is a phosphotyrosine (tyrosine 1007). Residues 1056–1213 (IFQSCDYKAF…SFENKPSKPI (158 aa)) form the PID domain. Residues 1197–1248 (HSSTLPESFENKPSKPIPKPRVSIRKSVDLLHASHTGQEPSERHTEEALRKF) are disordered. Basic and acidic residues predominate over residues 1236-1248 (PSERHTEEALRKF).

Isoform 3 interacts with DLG4. Interacts with EPHA8. Isoform 2 interacts with COIL. Isoform 4 interacts with APP and EPHA8. Isoform 6 interacts with EPHA8. Post-translationally, isoform 3 nuclear translocation requires an NMDAR-dependent proteolytic cleavage. As to expression, highly expressed in marrow from patients with pre-B ALL associated with the t(1;19) translocation. Strongly expressed in brain and testis. Expressed in fetal brain. Isoform 4 is highly expressed in brain (at protein level). Isoform 6 is expressed in brain and several cancer cell lines.

It localises to the cytoplasm. The protein resides in the nucleus. Its subcellular location is the postsynaptic density. It is found in the cell projection. The protein localises to the dendritic spine. It localises to the cajal body. Functionally, isoform 2 may participate in the regulation of nucleoplasmic coilin protein interactions in neuronal and transformed cells. Its function is as follows. Isoform 3 can regulate global protein synthesis by altering nucleolar numbers. Isoform 4 may play a role as a modulator of APP processing. Overexpression can down-regulate APP processing. The protein is Ankyrin repeat and sterile alpha motif domain-containing protein 1B (ANKS1B) of Homo sapiens (Human).